Consider the following 89-residue polypeptide: Small ribosomal subunit protein uS15 (89 aa).

A compositionally biased stretch (basic and acidic residues) spans 1-21 (MALSKEQKTETLKEFGLHETD). Residues 1-22 (MALSKEQKTETLKEFGLHETDT) are disordered.

The protein belongs to the universal ribosomal protein uS15 family. As to quaternary structure, part of the 30S ribosomal subunit. Forms a bridge to the 50S subunit in the 70S ribosome, contacting the 23S rRNA.

In terms of biological role, one of the primary rRNA binding proteins, it binds directly to 16S rRNA where it helps nucleate assembly of the platform of the 30S subunit by binding and bridging several RNA helices of the 16S rRNA. Forms an intersubunit bridge (bridge B4) with the 23S rRNA of the 50S subunit in the ribosome. The polypeptide is Small ribosomal subunit protein uS15 (Corynebacterium jeikeium (strain K411)).